The following is a 79-amino-acid chain: Hemoglobin subunit zeta (79 aa).

At serine 1 the chain carries N-acetylserine. Residues 1 to 79 (SLTKTXXTII…FKLLSHXFLV (79 aa)) form the Globin domain. 2 positions are modified to phosphoserine: serine 38 and serine 53. Histidine 59 serves as a coordination point for heme b.

Belongs to the globin family. In terms of assembly, heterotetramer of two zeta chains and two epsilon chains.

In terms of biological role, the zeta chain is an alpha-type chain of mammalian embryonic hemoglobin. In Notamacropus eugenii (Tammar wallaby), this protein is Hemoglobin subunit zeta.